Consider the following 322-residue polypeptide: ATP-dependent 6-phosphofructokinase 1 (322 aa).

Gly-11 is an ATP binding site. 21–25 (RAVVR) contributes to the ADP binding site. ATP is bound by residues 72 to 73 (RS) and 102 to 105 (GDGT). Asp-103 lines the Mg(2+) pocket. Residue 126-128 (TID) coordinates substrate. The Proton acceptor role is filled by Asp-128. Arg-155 is a binding site for ADP. Residues Arg-163 and 170-172 (MGR) each bind substrate. ADP contacts are provided by residues 186–188 (GAE), Arg-212, and 214–216 (KKS). Substrate contacts are provided by residues Glu-223, Arg-246, and 252–255 (HIQR).

This sequence belongs to the phosphofructokinase type A (PFKA) family. ATP-dependent PFK group I subfamily. Prokaryotic clade 'B1' sub-subfamily. Homotetramer. It depends on Mg(2+) as a cofactor.

The protein resides in the cytoplasm. It carries out the reaction beta-D-fructose 6-phosphate + ATP = beta-D-fructose 1,6-bisphosphate + ADP + H(+). Its pathway is carbohydrate degradation; glycolysis; D-glyceraldehyde 3-phosphate and glycerone phosphate from D-glucose: step 3/4. Allosterically activated by ADP and other diphosphonucleosides. Allosterically inhibited by phosphoenolpyruvate which induces the dissociation of the active tetramer into an inactive two-subunit forms. In terms of biological role, catalyzes the phosphorylation of D-fructose 6-phosphate to fructose 1,6-bisphosphate by ATP, the first committing step of glycolysis. This chain is ATP-dependent 6-phosphofructokinase 1, found in Thermus thermophilus (strain ATCC 27634 / DSM 579 / HB8).